Consider the following 411-residue polypeptide: Cladofulvin cluster transcriptional coactivator claA (411 aa).

Residues 1-27 (MSDSLAGNGMRQNLNRSSTSSNHTGHA) are compositionally biased toward polar residues. The interval 1 to 32 (MSDSLAGNGMRQNLNRSSTSSNHTGHAQNGRA) is disordered. One can recognise an HTH iclR-type domain in the interval 47-117 (LACQVQSLAC…DPGHIAHTAL (71 aa)). A DNA-binding region (H-T-H motif) is located at residues 77–96 (LHDVAELANVPASQLSRVVR).

It localises to the nucleus. Functionally, transcriptional coactivator; part of the gene cluster that mediates the biosynthesis of cladofulvin, a conidial pigment not required for virulence but that plays a role in fitness and resistance to environmental stresses including UV light and low-temperature stress. With claE, coregulates the production of cladofulvin. The protein is Cladofulvin cluster transcriptional coactivator claA of Passalora fulva (Tomato leaf mold).